The chain runs to 189 residues: Peptidyl-tRNA hydrolase (189 aa).

Tyr15 is a binding site for tRNA. His20 acts as the Proton acceptor in catalysis. TRNA is bound by residues Phe66, Asn68, and Asn114.

Belongs to the PTH family. Monomer.

It localises to the cytoplasm. It catalyses the reaction an N-acyl-L-alpha-aminoacyl-tRNA + H2O = an N-acyl-L-amino acid + a tRNA + H(+). In terms of biological role, hydrolyzes ribosome-free peptidyl-tRNAs (with 1 or more amino acids incorporated), which drop off the ribosome during protein synthesis, or as a result of ribosome stalling. Its function is as follows. Catalyzes the release of premature peptidyl moieties from peptidyl-tRNA molecules trapped in stalled 50S ribosomal subunits, and thus maintains levels of free tRNAs and 50S ribosomes. In Streptococcus pyogenes serotype M3 (strain ATCC BAA-595 / MGAS315), this protein is Peptidyl-tRNA hydrolase.